The primary structure comprises 181 residues: CDP-archaeol synthase (181 aa).

5 consecutive transmembrane segments (helical) span residues V7–A27, A55–A75, G80–V100, F128–F148, and L150–I170.

This sequence belongs to the CDP-archaeol synthase family. Mg(2+) is required as a cofactor.

The protein resides in the cell membrane. The enzyme catalyses 2,3-bis-O-(geranylgeranyl)-sn-glycerol 1-phosphate + CTP + H(+) = CDP-2,3-bis-O-(geranylgeranyl)-sn-glycerol + diphosphate. Its pathway is membrane lipid metabolism; glycerophospholipid metabolism. Its function is as follows. Catalyzes the formation of CDP-2,3-bis-(O-geranylgeranyl)-sn-glycerol (CDP-archaeol) from 2,3-bis-(O-geranylgeranyl)-sn-glycerol 1-phosphate (DGGGP) and CTP. This reaction is the third ether-bond-formation step in the biosynthesis of archaeal membrane lipids. In Halobacterium salinarum (strain ATCC 29341 / DSM 671 / R1), this protein is CDP-archaeol synthase.